The primary structure comprises 472 residues: Putative cytochrome P450 135B1 (472 aa).

Cys-388 serves as a coordination point for heme. Residues 442-472 (RDVSATSQATAQGAGCPAARGGGPSRAVGSQ) are disordered. Positions 452 to 472 (AQGAGCPAARGGGPSRAVGSQ) are enriched in low complexity.

This sequence belongs to the cytochrome P450 family. Heme serves as cofactor.

The sequence is that of Putative cytochrome P450 135B1 (cyp135B1) from Mycobacterium bovis (strain ATCC BAA-935 / AF2122/97).